We begin with the raw amino-acid sequence, 317 residues long: Transaldolase 2 (317 aa).

Catalysis depends on Lys-132, which acts as the Schiff-base intermediate with substrate.

The protein belongs to the transaldolase family. Type 1 subfamily. Homodimer.

Its subcellular location is the cytoplasm. The enzyme catalyses D-sedoheptulose 7-phosphate + D-glyceraldehyde 3-phosphate = D-erythrose 4-phosphate + beta-D-fructose 6-phosphate. It participates in carbohydrate degradation; pentose phosphate pathway; D-glyceraldehyde 3-phosphate and beta-D-fructose 6-phosphate from D-ribose 5-phosphate and D-xylulose 5-phosphate (non-oxidative stage): step 2/3. Transaldolase is important for the balance of metabolites in the pentose-phosphate pathway. The protein is Transaldolase 2 of Pectobacterium atrosepticum (strain SCRI 1043 / ATCC BAA-672) (Erwinia carotovora subsp. atroseptica).